Here is a 125-residue protein sequence, read N- to C-terminus: MQTWLFVAAGGAIGACLRFGISELMALLLGRHFPYGTLVVNVVGSFIMGIAFALISHGHVVEHPMKPLLMVGILGALTTFSSFALDTVVLAQQGAYLKAVLNMGLNLSLCLAMVLLGMQLVASRV.

A run of 4 helical transmembrane segments spans residues 4–24 (WLFV…ISEL), 35–55 (YGTL…FALI), 69–89 (LMVG…DTVV), and 103–123 (MGLN…LVAS). Na(+) contacts are provided by glycine 75 and threonine 78.

Belongs to the fluoride channel Fluc/FEX (TC 1.A.43) family.

It localises to the cell inner membrane. The enzyme catalyses fluoride(in) = fluoride(out). Its activity is regulated as follows. Na(+) is not transported, but it plays an essential structural role and its presence is essential for fluoride channel function. Fluoride-specific ion channel. Important for reducing fluoride concentration in the cell, thus reducing its toxicity. The sequence is that of Fluoride-specific ion channel FluC from Aeromonas salmonicida (strain A449).